We begin with the raw amino-acid sequence, 356 residues long: MTPHDPVSVEAVPKIELHVHLEGTVEPATVLDIAARNGLALPVSTVDELSALYRVTTFSDFLRLWILTTNVLRKAEDFSQVVVDYARRAKRHGAVYIEGIFSPVERVMRGVGWAEIFDGYCEGAERAYAEHGVVVRLTPEAYRGADPELVAEMVRYAGRYRDRGVVGVGIGGDERARPTRHYAAAFAPAVDLGLGVVPHAGEFPLFPDGASGAATLRETIEALNPVRIRHGIAAAADPALVAVIRERGIVLDVCPTSNLRTGAIRDLADHPLPRLAAAGIPCTVGTDDPAVFDTDLSREFTIAARLGVEPRLLYDAGITGALCDDDVKSHLRQIGAATTWPTTTATWSTTAAGESL.

Histidine 18 and histidine 20 together coordinate Zn(2+). Residues arginine 73, glutamate 140, and glycine 172 each coordinate substrate. Residue histidine 199 participates in Zn(2+) binding. The Proton donor role is filled by glutamate 202. Residue aspartate 287 coordinates Zn(2+).

The protein belongs to the metallo-dependent hydrolases superfamily. Adenosine and AMP deaminases family. Zn(2+) serves as cofactor.

It carries out the reaction 6-amino-6-deoxyfutalosine + H2O + H(+) = futalosine + NH4(+). It functions in the pathway quinol/quinone metabolism; menaquinone biosynthesis. Functionally, catalyzes the deamination of aminodeoxyfutalosine (AFL) into futalosine (FL), a step in the biosynthesis of menaquinone (MK, vitamin K2). Is very poorly efficient on 1-(6-amino-9H-purin-9-yl)-1-deoxy-N-ethyl-beta-D-ribofuranuronamide (NECA), adenosine, 5'-methylthioadenosine, 5'-deoxyadenosine, 2'-deoxyadenosine, and AMP as substrate. This Acidothermus cellulolyticus (strain ATCC 43068 / DSM 8971 / 11B) protein is Aminodeoxyfutalosine deaminase.